The sequence spans 150 residues: UPF0178 protein HCH_06960 (150 aa).

This sequence belongs to the UPF0178 family.

The sequence is that of UPF0178 protein HCH_06960 from Hahella chejuensis (strain KCTC 2396).